Here is a 421-residue protein sequence, read N- to C-terminus: F-box only protein 9 (421 aa).

The tract at residues 1 to 63 is disordered; sequence MAESNQNTDG…AELRRRQETA (63 aa). Residues 11 to 20 show a composition bias toward acidic residues; the sequence is AVEEGEDENT. Over residues 40–52 the composition is skewed to polar residues; sequence LQPSSGGQRSFSR. Basic and acidic residues predominate over residues 54-63; sequence AELRRRQETA. The stretch at 68–101 is one TPR repeat; the sequence is ARELFLKAVEEEQNGAVYEAIKYYKSAMQLVPDI. Residues 158–209 form the F-box domain; that stretch reads QVHISALPFEVLMYIFRWVVSCDLDLRALEQLSLVCRGFYICARDPEIWRSA.

As to quaternary structure, part of the SCF (SKP1-CUL1-F-box) E3 ubiquitin-protein ligase complex SCF(fbxo9).

It is found in the cytoplasm. It participates in protein modification; protein ubiquitination. Functionally, substrate recognition component of a SCF (SKP1-CUL1-F-box protein) E3 ubiquitin-protein ligase complex which mediates the ubiquitination and subsequent proteasomal degradation of target proteins and acts as a regulator of mTOR signaling. This Danio rerio (Zebrafish) protein is F-box only protein 9 (fbxo9).